The chain runs to 426 residues: 26S proteasome regulatory subunit 7 homolog A (426 aa).

ATP is bound at residue 209-216 (GPPGTGKT). Glycyl lysine isopeptide (Lys-Gly) (interchain with G-Cter in ubiquitin) cross-links involve residues K400 and K415.

Belongs to the AAA ATPase family. As to quaternary structure, component of the 19S regulatory particle (RP/PA700) base subcomplex of the 26S proteasome. The 26S proteasome is composed of a core protease (CP), known as the 20S proteasome, capped at one or both ends by the 19S regulatory particle (RP/PA700). The RP/PA700 complex is composed of at least 17 different subunits in two subcomplexes, the base and the lid, which form the portions proximal and distal to the 20S proteolytic core, respectively.

The protein localises to the cytoplasm. The protein resides in the nucleus. Its function is as follows. The 26S proteasome is involved in the ATP-dependent degradation of ubiquitinated proteins. The regulatory (or ATPase) complex confers ATP dependency and substrate specificity to the 26S complex. The chain is 26S proteasome regulatory subunit 7 homolog A (RPT1A) from Arabidopsis thaliana (Mouse-ear cress).